The following is a 394-amino-acid chain: uncharacterized protein (394 aa).

11 helical membrane-spanning segments follow: residues 10–30, 50–70, 79–99, 100–120, 138–158, 166–186, 218–238, 243–263, 291–311, 337–357, and 364–384; these read PALI…NYYA, FIVT…VPLG, IVSM…SQSL, AMMI…QILV, TIMS…GLLA, VFWV…RGLP, LLGC…AFLL, FNYS…GALG, WLAI…ILVL, LTAG…LISA, and GWAG…LVWW.

Belongs to the major facilitator superfamily.

The protein resides in the cell inner membrane. This is an uncharacterized protein from Escherichia coli O157:H7.